A 2291-amino-acid chain; its full sequence is MRGHQFKSWILELREILREIKNSHHFLDSWTQFTSVGSFIHIFFHQERFLKLFDPRIWSILLSRNSQGSTSNRYFTIKGVILFVVAVLIYRINNRNMVERKNLYLIGLLPIPMNSIGPRNDTLEESVGSSNINRLIVSLLYLPKGKKISESCFLNPKESTWVLPITKKCSMPESNWGSRWWRNWIGKKRDSSCKISNETVAGIEILFKEKDLKYLEFLFVYYMDDPIRKDHDWELFDRLSLRKSRNRINLNSGPLFEILVKHWISYLMSAFREKIPIEVEGFFKQQGAGSTIQSNDIEHVSHLFSRNKWAISLQNCAQFHMWQFRQDLFVSWGKNPPESDFLRNVSRENWIWLDNVWLVNKDRFFSKVQNVSSNIQYDSTRSSFVQVTDSSQLKGSSDQSRDHLDSISNEDSEYHTLINQREIQQRKERSILWDPSFLQMERKEIESGRFPKCLSGYSSMSRLFTEREKQMINHLFPEEIEEFLGNPTRSVRSFFSDRWSELHLGSNPTERSTRDQKLLKKQQDLSFVPSRRSENKEMVNIFKIITYLQNTVSIHPISSDPGCDMVPKDEPDMDSSNKISFLNKNPFFDLFHLFHDRNRGGYTLHYDFESEERFQEMADLFTLSITEPDLVYHKGFAFSIDSCGLDQKQFLNEARDESKKKSLLVLPPIFYEENESFSRRIRKKWVRISCGNDLEDPKPKIVVFASNNIMEAVTQYRLIRNLIQIQYSTYGYIRNVLNRFFLMNRSDRNFEYGIQRDQIGKDTLNHRTIMKYTINQYLSNLKKSQKKWFEPLILISRTERSMNRDPDAYRYKWSNGSKNFQEHLEQSVSEQKSRFQVVFDRLRINQYSIDWSEVIDKKDLSKPLRFFLSKPLRFFLSKSLLFLSKLLFFLSNSLPFFCVSFGNIPIHRSEIYIYELKGPNDQLCNQLLESIGLQIVHLKKLKPFLLDDHDTSQKSKFLINGGTISPFLFNKIPKWMIDSFHTRNNRRKSFDNPDSNFSMIFHDQDNWLNPVKPFHRSSLISSFYKANRLRFLNNPHHFCFYWNTRFPFSVEKARINNSYFTYGQFLNILFIRNKIFSLCVGKKKHAFWGRDTISPIESQVSNIFIPNDFPQSGDETYNLYKSFHFPSRSDPFVRRAIYSIADISGTPLTEGQIVNFERTYCQPLSDMNLSDSEGKNLHQYLNFNSNMGLIHTPCSEKDLSSEKRKKRSLCLKKCVEKGQMYRTFQRDSAFSTLSKWNLFQTYMPWFLTSTGYKYLNLIFLDTFSDLLPILSSSQKFVSIFPDIMHGSGISWRILQKKLCLPQWNLISEISEISSKCLHNLLLSEEMIHRNNESPLISTHLRSPNAREFLYSILFLLLVAGYLVRTHLLFVSRASSELQTEFEKVKSLMIPSSMIELRKLLDRYPTSEPNSFWLKNLFLVALEQLGDSLEEIRGSASGGNMLGPAYGVKSIRSKKKDWNINLIEIIDLIPNPINRITFSRNTRHLSHTSKEIYSLIRKRKNVNGDWIDDKIESWVANSDSIADEEREFLVQFSTLTTENRIDQILLSLTHSDHLSKNDSGYQMIEQPGAIYLRYLVDIHKKHLMNYEFNPSCLAERRIFLAHYQTITYSQTSCGENSFHFPSHGKPFSLRLALSPSRGILVIGSIGTGRSYLVKYLATNSYVPFITVFLNKFLDNKPKGFLLDEIDIDDSDDIDDSDNLDASDDIGRDLDTELELLTRMNGLTMDMMPEIDRFYITLQFELAKAMSPCIIWIPNIHDLDVNESNDLSLGLLVNHLSRDCERCSTRNILVIASTHIPQKVDPALIAPNKLNTCIKIRRLLIPQQRKHFFTLSYTRGFHLEKKMFHTNGFGSITMGSNARDLVALTNEVLSISITQKKSIIDTNTIRSALHRQTWDLRSQVRSVQDHGILFYQIGRAVAQNVLLSNCPIDPISIYMKKKSCNEGDSYLYKWYFELGTSMKRLTILLYLLSCSAGSVAQDLWSLSGPDEKNGITSYGLVENDSDLVHGLLEVEGALVGSSRTEKDCSQFDNDRVTLLLRPEPRNPLDMMQKGSCSILDQRFLYEKYESEFEEGEGEGALDPQEDLFNHIVWAPRIWRPWGFLFDCIERPNELGFPYWSRSFRGKRIIYDEEDELQENDSGFLQSGTMQYQTRDRSSKEQGLFRISQFIWDPADPLFFLFKDQPPGSVFSHRELFADEEMSKGLLTSQTDPPTSIYKRWFIKNTQEKHFELLINRQRWLRTNSSLSNGSFRSNTLSESYQYLSNLFLSNGTLLDQMTKTLLRKRWLFPDEMKIGFM.

Residue 1642–1649 (GSIGTGRS) coordinates ATP.

Belongs to the Ycf2 family.

The protein localises to the plastid. It is found in the chloroplast stroma. In terms of biological role, probable ATPase of unknown function. Its presence in a non-photosynthetic plant (Epifagus virginiana) and experiments in tobacco indicate that it has an essential function which is probably not related to photosynthesis. The polypeptide is Protein Ycf2 A (ycf2-A) (Atropa belladonna (Belladonna)).